The sequence spans 123 residues: Large ribosomal subunit protein bL12 (123 aa).

It belongs to the bacterial ribosomal protein bL12 family. Homodimer. Part of the ribosomal stalk of the 50S ribosomal subunit. Forms a multimeric L10(L12)X complex, where L10 forms an elongated spine to which 2 to 4 L12 dimers bind in a sequential fashion. Binds GTP-bound translation factors.

Its function is as follows. Forms part of the ribosomal stalk which helps the ribosome interact with GTP-bound translation factors. Is thus essential for accurate translation. The chain is Large ribosomal subunit protein bL12 from Photorhabdus laumondii subsp. laumondii (strain DSM 15139 / CIP 105565 / TT01) (Photorhabdus luminescens subsp. laumondii).